A 397-amino-acid chain; its full sequence is Tryptophan synthase beta chain (397 aa).

Lys-87 bears the N6-(pyridoxal phosphate)lysine mark.

The protein belongs to the TrpB family. As to quaternary structure, tetramer of two alpha and two beta chains. Requires pyridoxal 5'-phosphate as cofactor.

The enzyme catalyses (1S,2R)-1-C-(indol-3-yl)glycerol 3-phosphate + L-serine = D-glyceraldehyde 3-phosphate + L-tryptophan + H2O. Its pathway is amino-acid biosynthesis; L-tryptophan biosynthesis; L-tryptophan from chorismate: step 5/5. In terms of biological role, the beta subunit is responsible for the synthesis of L-tryptophan from indole and L-serine. This Escherichia coli O139:H28 (strain E24377A / ETEC) protein is Tryptophan synthase beta chain.